The sequence spans 331 residues: Bifunctional nuclease (331 aa).

Residues 126 to 261 form the BFN domain; that stretch reads CVQNNPRVLR…RIAYNNGLKV (136 aa). The UVR domain maps to 291 to 326; the sequence is EAQEFDLVRNMLVAAVEERYKDAAQYRDQLFMFRAK.

The protein belongs to the bifunctional nuclease family.

It is found in the nucleus. Bifunctional nuclease with both RNase and DNase activities. Involved in basal defense response. Participates in abscisic acid-derived callose deposition following infection by a necrotrophic pathogen. The protein is Bifunctional nuclease (BBD) of Oryza minuta.